We begin with the raw amino-acid sequence, 91 residues long: Small ribosomal subunit protein bS20 (91 aa).

Over residues 1 to 18 (MPLHKSAEKRLRQSERRN) the composition is skewed to basic and acidic residues. Residues 1-26 (MPLHKSAEKRLRQSERRNARNRSRKK) form a disordered region.

The protein belongs to the bacterial ribosomal protein bS20 family.

Binds directly to 16S ribosomal RNA. The sequence is that of Small ribosomal subunit protein bS20 from Pelodictyon phaeoclathratiforme (strain DSM 5477 / BU-1).